Reading from the N-terminus, the 269-residue chain is 3-methyl-2-oxobutanoate hydroxymethyltransferase (269 aa).

Mg(2+) contacts are provided by D52 and D91. Residues 52-53 (DT), D91, and K121 contribute to the 3-methyl-2-oxobutanoate site. E123 lines the Mg(2+) pocket. E186 functions as the Proton acceptor in the catalytic mechanism.

It belongs to the PanB family. In terms of assembly, homodecamer; pentamer of dimers. Mg(2+) serves as cofactor.

The protein localises to the cytoplasm. The catalysed reaction is 3-methyl-2-oxobutanoate + (6R)-5,10-methylene-5,6,7,8-tetrahydrofolate + H2O = 2-dehydropantoate + (6S)-5,6,7,8-tetrahydrofolate. It participates in cofactor biosynthesis; (R)-pantothenate biosynthesis; (R)-pantoate from 3-methyl-2-oxobutanoate: step 1/2. Functionally, catalyzes the reversible reaction in which hydroxymethyl group from 5,10-methylenetetrahydrofolate is transferred onto alpha-ketoisovalerate to form ketopantoate. The protein is 3-methyl-2-oxobutanoate hydroxymethyltransferase of Rhodopirellula baltica (strain DSM 10527 / NCIMB 13988 / SH1).